The following is a 364-amino-acid chain: MAAHPTVGVEEEFLLVDPDSGAPIARNRDVARHAADRGVDLQLELTSCQVETATGVASSMADVREQLTHLRSTVARAADDSGARLLAVAVPPTVPHEFPVTDNPRYHRIAERFGMLAREQGICGAHVHVAVPTREVAIRVSNRLRPWLPVLLALTANSAIYRNADSGYASWRRMLWARWPSAGPPPHFDSADEFDAMVRMLLQSGAMLDEGQVYWDVRPSADFPTIEVRVADVPATVADTVLFAAIVRATVMTLLGDERDGAGVPRISAHALDAAYWRSARDGLDGIAIDLAESHAPMPARDLLGVLVDRITPALRAVGDHDLVRDGLARLDDEGNGAMRQRAAWRRRGEIADVIDAVAEATLA.

The protein belongs to the glutamate--cysteine ligase type 2 family. YbdK subfamily.

The enzyme catalyses L-cysteine + L-glutamate + ATP = gamma-L-glutamyl-L-cysteine + ADP + phosphate + H(+). In terms of biological role, ATP-dependent carboxylate-amine ligase which exhibits weak glutamate--cysteine ligase activity. The sequence is that of Putative glutamate--cysteine ligase 2-2 from Mycobacterium sp. (strain JLS).